A 333-amino-acid chain; its full sequence is 4-hydroxythreonine-4-phosphate dehydrogenase (333 aa).

Positions 133 and 134 each coordinate substrate. 3 residues coordinate a divalent metal cation: histidine 169, histidine 214, and histidine 269. Substrate-binding residues include lysine 277, asparagine 286, and arginine 295.

The protein belongs to the PdxA family. In terms of assembly, homodimer. Requires Zn(2+) as cofactor. The cofactor is Mg(2+). Co(2+) is required as a cofactor.

The protein localises to the cytoplasm. It catalyses the reaction 4-(phosphooxy)-L-threonine + NAD(+) = 3-amino-2-oxopropyl phosphate + CO2 + NADH. It functions in the pathway cofactor biosynthesis; pyridoxine 5'-phosphate biosynthesis; pyridoxine 5'-phosphate from D-erythrose 4-phosphate: step 4/5. Catalyzes the NAD(P)-dependent oxidation of 4-(phosphooxy)-L-threonine (HTP) into 2-amino-3-oxo-4-(phosphooxy)butyric acid which spontaneously decarboxylates to form 3-amino-2-oxopropyl phosphate (AHAP). The polypeptide is 4-hydroxythreonine-4-phosphate dehydrogenase (Caulobacter vibrioides (strain ATCC 19089 / CIP 103742 / CB 15) (Caulobacter crescentus)).